A 1179-amino-acid polypeptide reads, in one-letter code: DNA-directed RNA polymerase subunit beta' (1179 aa).

4 residues coordinate Zn(2+): Cys-60, Cys-62, Cys-75, and Cys-78. Residues Asp-449, Asp-451, and Asp-453 each contribute to the Mg(2+) site. Residues Cys-796, Cys-871, Cys-878, and Cys-881 each coordinate Zn(2+).

This sequence belongs to the RNA polymerase beta' chain family. The RNAP catalytic core consists of 2 alpha, 1 beta, 1 beta' and 1 omega subunit. When a sigma factor is associated with the core the holoenzyme is formed, which can initiate transcription. The cofactor is Mg(2+). Zn(2+) serves as cofactor.

It catalyses the reaction RNA(n) + a ribonucleoside 5'-triphosphate = RNA(n+1) + diphosphate. Its function is as follows. DNA-dependent RNA polymerase catalyzes the transcription of DNA into RNA using the four ribonucleoside triphosphates as substrates. The polypeptide is DNA-directed RNA polymerase subunit beta' (Symbiobacterium thermophilum (strain DSM 24528 / JCM 14929 / IAM 14863 / T)).